Reading from the N-terminus, the 172-residue chain is Centrin-1 (172 aa).

The disordered stretch occupies residues 1–31; the sequence is MASGFKKPSAASTGQKRKVAPKPELTEDQKQ. 4 EF-hand domains span residues 28 to 63, 64 to 99, 101 to 136, and 137 to 172; these read DQKQEVREAFDLFDVDGSGTIDAKELKVAMRALGFE, PRKEEMKKMISEVDREGTGKISFNDFLAVMTQKMSE, DTKEEILKAFRLFDDDETGKISFKNLKRVANELGEN, and LTDEELQEMIDEADRDGDGEVNEEEFLRIMKKTSLY. Ca(2+)-binding residues include aspartate 41, aspartate 43, serine 45, threonine 47, and glutamate 52. The Ca(2+) site is built by aspartate 150, aspartate 152, aspartate 154, glutamate 156, and glutamate 161.

Belongs to the centrin family. Monomer. Interacts with CIMAP3. Interacts with USP49.

It is found in the cytoplasm. The protein localises to the cytoskeleton. Its subcellular location is the microtubule organizing center. It localises to the centrosome. The protein resides in the cell projection. It is found in the cilium. Plays a fundamental role in microtubule-organizing center structure and function. Plays a role in sperm cilia formation. The chain is Centrin-1 from Homo sapiens (Human).